The chain runs to 374 residues: CMP-N-acetylneuraminate-beta-1,4-galactoside alpha-2,3-sialyltransferase (374 aa).

The Cytoplasmic portion of the chain corresponds to 1–8; that stretch reads MGLLVFVR. The helical; Signal-anchor for type II membrane protein transmembrane segment at 9–28 threads the bilayer; sequence NLLLALCLFLVLGFLYYSAW. The Lumenal portion of the chain corresponds to 29 to 374; it reads KLHLLQWEDS…RVITDLSSGI (346 aa). N-linked (GlcNAc...) asparagine glycosylation is found at Asn-79 and Asn-170. A disulfide bond links Cys-159 and Cys-313.

Belongs to the glycosyltransferase 29 family. Found in all tissues tested. High expression found in brain, liver, kidney, colon, heart and spleen.

It localises to the membrane. Its subcellular location is the golgi apparatus. The protein localises to the golgi stack membrane. The enzyme catalyses a beta-D-galactosyl-(1-&gt;4)-N-acetyl-beta-D-glucosaminyl derivative + CMP-N-acetyl-beta-neuraminate = an N-acetyl-alpha-neuraminyl-(2-&gt;3)-beta-D-galactosyl-(1-&gt;4)-N-acetyl-beta-D-glucosaminyl derivative + CMP + H(+). The protein operates within protein modification; protein glycosylation. Catalyzes the formation of the NeuAc-alpha-2,3-Gal-beta-1,4-GlcNAc-, NeuAc-alpha-2,3-Gal-beta-1,3-GlcNAc- and NeuAc-alpha-2,3-Gal-beta-1,3-GalNAc- sequences found in terminal carbohydrate groups of glycoproteins and glycolipids. The highest activity is toward Gal-beta-1,3-GlcNAc and the lowest toward Gal-beta-1,3-GalNAc. The polypeptide is CMP-N-acetylneuraminate-beta-1,4-galactoside alpha-2,3-sialyltransferase (St3gal3) (Mus musculus (Mouse)).